We begin with the raw amino-acid sequence, 747 residues long: Elongation factor G, mitochondrial (747 aa).

The N-terminal 32 residues, 1–32 (MTLITRVLNGNLPLRLSTLKAARQLQCGYSSH), are a transit peptide targeting the mitochondrion. The 278-residue stretch at 42–319 (ERIRNIGISA…AVVDYLPNPG (278 aa)) folds into the tr-type G domain. GTP is bound by residues 51–58 (AHIDSGKT), 118–122 (DTPGH), and 172–175 (NKLD).

It belongs to the TRAFAC class translation factor GTPase superfamily. Classic translation factor GTPase family. EF-G/EF-2 subfamily.

The protein resides in the mitochondrion. It participates in protein biosynthesis; polypeptide chain elongation. In terms of biological role, mitochondrial GTPase that catalyzes the GTP-dependent ribosomal translocation step during translation elongation. During this step, the ribosome changes from the pre-translocational (PRE) to the post-translocational (POST) state as the newly formed A-site-bound peptidyl-tRNA and P-site-bound deacylated tRNA move to the P and E sites, respectively. Catalyzes the coordinated movement of the two tRNA molecules, the mRNA and conformational changes in the ribosome. Essential during development as it acts as a retrograde signal from mitochondria to the nucleus to slow down cell proliferation if mitochondrial energy output is low. This chain is Elongation factor G, mitochondrial, found in Drosophila mojavensis (Fruit fly).